A 327-amino-acid chain; its full sequence is MYQSLMTVRETQIAIKEVKTFFEDQLAKRLELFRVSAPLFVTKKSGLNDHLNGVERPIEFDMLHSGEELEIVHSLAKWKRFALHEYGYEAGEGLYTNMNAIRRDEELDATHSIYVDQWDWEKIVQKEWRTVDYLQKTVLTIYGIFKDLEDHLFEKYPFLGKYLPEEIVFVTSQELEDKYPELTPKDREHAIAKEHGAVFIIGIGDALRSGEKHDGRAADYDDWKLNGDILFWHPVLQSSFELSSMGIRVDSKSXDEQLTKTGEDFKREYDFHKGILEDVLPLTIGGGIGQSRMCMYFLRKAHIGEVQSSVWPDDLREACKKENIHLF.

The protein belongs to the class-II aminoacyl-tRNA synthetase family. AsnA subfamily.

It localises to the cytoplasm. The enzyme catalyses L-aspartate + NH4(+) + ATP = L-asparagine + AMP + diphosphate + H(+). Its pathway is amino-acid biosynthesis; L-asparagine biosynthesis; L-asparagine from L-aspartate (ammonia route): step 1/1. In Bacillus cereus (strain AH820), this protein is Aspartate--ammonia ligase.